Here is a 560-residue protein sequence, read N- to C-terminus: Formate--tetrahydrofolate ligase (560 aa).

70 to 77 (TPAGEGKT) lines the ATP pocket.

Belongs to the formate--tetrahydrofolate ligase family.

It catalyses the reaction (6S)-5,6,7,8-tetrahydrofolate + formate + ATP = (6R)-10-formyltetrahydrofolate + ADP + phosphate. Its pathway is one-carbon metabolism; tetrahydrofolate interconversion. This is Formate--tetrahydrofolate ligase from Methanocorpusculum labreanum (strain ATCC 43576 / DSM 4855 / Z).